A 777-amino-acid chain; its full sequence is DNA ligase (777 aa).

Residues Asp35 to Asp39, Ser84 to Leu85, and Glu116 each bind NAD(+). The active-site N6-AMP-lysine intermediate is Lys118. Arg139, Glu176, Lys293, and Lys317 together coordinate NAD(+). Zn(2+)-binding residues include Cys411, Cys414, Cys429, and Cys435. The region spanning Met691–Leu777 is the BRCT domain.

Belongs to the NAD-dependent DNA ligase family. LigA subfamily. Mg(2+) serves as cofactor. It depends on Mn(2+) as a cofactor.

The catalysed reaction is NAD(+) + (deoxyribonucleotide)n-3'-hydroxyl + 5'-phospho-(deoxyribonucleotide)m = (deoxyribonucleotide)n+m + AMP + beta-nicotinamide D-nucleotide.. DNA ligase that catalyzes the formation of phosphodiester linkages between 5'-phosphoryl and 3'-hydroxyl groups in double-stranded DNA using NAD as a coenzyme and as the energy source for the reaction. It is essential for DNA replication and repair of damaged DNA. In Alcanivorax borkumensis (strain ATCC 700651 / DSM 11573 / NCIMB 13689 / SK2), this protein is DNA ligase.